The sequence spans 157 residues: Endoribonuclease YbeY (157 aa).

Zn(2+)-binding residues include His122, His126, and His132.

It belongs to the endoribonuclease YbeY family. It depends on Zn(2+) as a cofactor.

It is found in the cytoplasm. Its function is as follows. Single strand-specific metallo-endoribonuclease involved in late-stage 70S ribosome quality control and in maturation of the 3' terminus of the 16S rRNA. This Bacillus subtilis (strain 168) protein is Endoribonuclease YbeY.